A 283-amino-acid chain; its full sequence is NFU1 iron-sulfur cluster scaffold homolog, mitochondrial (283 aa).

Residues 1–30 constitute a mitochondrion transit peptide; that stretch reads MSKFLSQAALNTLRNTRLGSRQLVRSFAGI. Residues 182-250 are nifU; the sequence is IKELLDTRIR…IPEVESVEQV (69 aa). [4Fe-4S] cluster-binding residues include cysteine 219 and cysteine 222.

It belongs to the NifU family.

It localises to the mitochondrion. Molecular scaffold for [Fe-S] cluster assembly of mitochondrial iron-sulfur proteins. This Drosophila yakuba (Fruit fly) protein is NFU1 iron-sulfur cluster scaffold homolog, mitochondrial.